Here is a 734-residue protein sequence, read N- to C-terminus: Ribosomal RNA large subunit methyltransferase K/L (734 aa).

Residues 49–167 (QAYRVCMWSR…KTEHTYCLDL (119 aa)) enclose the THUMP domain.

It belongs to the methyltransferase superfamily. RlmKL family.

The protein resides in the cytoplasm. It catalyses the reaction guanosine(2445) in 23S rRNA + S-adenosyl-L-methionine = N(2)-methylguanosine(2445) in 23S rRNA + S-adenosyl-L-homocysteine + H(+). The enzyme catalyses guanosine(2069) in 23S rRNA + S-adenosyl-L-methionine = N(2)-methylguanosine(2069) in 23S rRNA + S-adenosyl-L-homocysteine + H(+). In terms of biological role, specifically methylates the guanine in position 2445 (m2G2445) and the guanine in position 2069 (m7G2069) of 23S rRNA. The polypeptide is Ribosomal RNA large subunit methyltransferase K/L (Acinetobacter baylyi (strain ATCC 33305 / BD413 / ADP1)).